Consider the following 220-residue polypeptide: NAD(P)H-hydrate epimerase (220 aa).

In terms of domain architecture, YjeF N-terminal spans 6–203 (ARHLTTLATG…SFDLPEALFH (198 aa)). 53-57 (HNGGV) lines the (6S)-NADPHX pocket. The K(+) site is built by Asn54 and Asp116. (6S)-NADPHX is bound by residues 120–126 (GMRLEGP) and Asp149. Position 152 (Thr152) interacts with K(+).

The protein belongs to the NnrE/AIBP family. It depends on K(+) as a cofactor.

It catalyses the reaction (6R)-NADHX = (6S)-NADHX. The enzyme catalyses (6R)-NADPHX = (6S)-NADPHX. Functionally, catalyzes the epimerization of the S- and R-forms of NAD(P)HX, a damaged form of NAD(P)H that is a result of enzymatic or heat-dependent hydration. This is a prerequisite for the S-specific NAD(P)H-hydrate dehydratase to allow the repair of both epimers of NAD(P)HX. The sequence is that of NAD(P)H-hydrate epimerase from Truepera radiovictrix (strain DSM 17093 / CIP 108686 / LMG 22925 / RQ-24).